A 273-amino-acid chain; its full sequence is Homeobox protein HMX2 (273 aa).

The segment at 1–154 (MGSKEDVGKG…TGAAKKKTRT (154 aa)) is disordered. Over residues 114-123 (PDFKEEKERL) the composition is skewed to basic and acidic residues. Positions 149 to 208 (KKKTRTVFSRSQVYQLESTFDMKRYLSSSERACLASSLQLTETQVKTWFQNRRNKWKRQL) form a DNA-binding region, homeobox.

Belongs to the HMX homeobox family. As to expression, expressed in the developing CNS, including a specific expression in vestibular structures throughout inner ear development.

It is found in the nucleus. In terms of biological role, transcription factor involved in specification of neuronal cell types and which is required for inner ear and hypothalamus development. This chain is Homeobox protein HMX2 (Hmx2), found in Mus musculus (Mouse).